The chain runs to 1074 residues: Telomerase reverse transcriptase (1074 aa).

The interval 240–265 (DKVSCETMQDGESGKTTLVQKQPGSK) is disordered. The span at 253-262 (GKTTLVQKQP) shows a compositional bias: polar residues. The short motif at 300 to 305 (TLGFLY) is the TFLY; involved in RNA binding element. Interaction with RNA template stretches follow at residues 355–360 (LPRRFF) and 461–486 (WKIKVNNCDWLKISKTGRVPPSELSY). The Reverse transcriptase domain maps to 552–877 (TPDQVAALPK…CLFPWCGLLL (326 aa)). 3 residues coordinate Mg(2+): aspartate 649, aspartate 810, and aspartate 811.

The protein belongs to the reverse transcriptase family. Telomerase subfamily. Catalytic subunit of the telomerase holoenzyme complex composed minimally of TERT and the telomerase RNA template component (TERC). In terms of tissue distribution, detected at highest levels in gill, ovary and testis, and at lower levels in brain, eye, heart, skin, spleen and stomach.

The protein localises to the nucleus. Its subcellular location is the chromosome. The protein resides in the telomere. The enzyme catalyses DNA(n) + a 2'-deoxyribonucleoside 5'-triphosphate = DNA(n+1) + diphosphate. In terms of biological role, telomerase is a ribonucleoprotein enzyme essential for the replication of chromosome termini in most eukaryotes. It elongates telomeres. It is a reverse transcriptase that adds simple sequence repeats to chromosome ends by copying a template sequence within the RNA component of the enzyme. The sequence is that of Telomerase reverse transcriptase from Takifugu rubripes (Japanese pufferfish).